A 558-amino-acid chain; its full sequence is PE cleavage protein A (558 aa).

The PE domain maps to 1–93 (MSFLVVVPEF…SGSYAAAEAT (93 aa)). D297 is an active-site residue.

It belongs to the mycobacterial PE family. PGRS subfamily. In terms of processing, undergoes auto-proteolytic processing.

It is found in the secreted. The protein localises to the cell surface. Functionally, aspartic protease that processes the lipase LipY and other PE_PGRS proteins. Can also cleave itself. The polypeptide is PE cleavage protein A (Mycobacterium tuberculosis (strain CDC 1551 / Oshkosh)).